We begin with the raw amino-acid sequence, 964 residues long: MDEQSVESIAEVFRCFICMEKLRDARLCPHCSKLCCFSCIRRWLTEQRAQCPHCRAPLQLRELVNCRWAEEVTQQLDTLQLCSLTKHEENEKDKCENHHEKLSVFCWTCKKCICHQCALWGGMHGGHTFKPLAEIYEQHVTKVNEEVAKLRRRLMELISLVQEVERNVEAVRNAKDERVREIRNAVEMMIARLDTQLKNKLITLMGQKTSLTQETELLESLLQEVEHQLRSCSKSELISKSSEILMMFQQVHRKPMASFVTTPVPPDFTSELVPSYDSATFVLENFSTLRQRADPVYSPPLQVSGLCWRLKVYPDGNGVVRGYYLSVFLELSAGLPETSKYEYRVEMVHQSCNDPTKNIIREFASDFEVGECWGYNRFFRLDLLANEGYLNPQNDTVILRFQVRSPTFFQKSRDQHWYITQLEAAQTSYIQQINNLKERLTIELSRTQKSRDLSPPDNHLSPQNDDALETRAKKSACSDMLLEGGPTTASVREAKEDEEDEEKIQNEDYHHELSDGDLDLDLVYEDEVNQLDGSSSSASSTATSNTEENDIDEETMSGENDVEYNNMELEEGELMEDAAAAGPAGSSHGYVGSSSRISRRTHLCSAATSSLLDIDPLILIHLLDLKDRSSIENLWGLQPRPPASLLQPTASYSRKDKDQRKQQAMWRVPSDLKMLKRLKTQMAEVRCMKTDVKNTLSEIKSSSAASGDMQTSLFSADQAALAACGTENSGRLQDLGMELLAKSSVANCYIRNSTNKKSNSPKPARSSVAGSLSLRRAVDPGENSRSKGDCQTLSEGSPGSSQSGSRHSSPRALIHGSIGDILPKTEDRQCKALDSDAVVVAVFSGLPAVEKRRKMVTLGANAKGGHLEGLQMTDLENNSETGELQPVLPEGASAAPEEGMSSDSDIECDTENEEQEEHTSVGGFHDSFMVMTQPPDEDTHSSFPDGEQIGPEDLSFNTDENSGR.

At M1 the chain carries N-acetylmethionine. The segment at 15–55 adopts an RING-type; degenerate zinc-finger fold; it reads CFICMEKLRDARLCPHCSKLCCFSCIRRWLTEQRAQCPHCR. The B box-type zinc finger occupies 90–132; that stretch reads NEKDKCENHHEKLSVFCWTCKKCICHQCALWGGMHGGHTFKPL. Zn(2+) contacts are provided by C95, H98, C117, and H124. The stretch at 132–234 forms a coiled coil; that stretch reads LAEIYEQHVT…VEHQLRSCSK (103 aa). The MATH domain maps to 276-403; that stretch reads YDSATFVLEN…NDTVILRFQV (128 aa). Residues 419–450 adopt a coiled-coil conformation; that stretch reads ITQLEAAQTSYIQQINNLKERLTIELSRTQKS. A Phosphoserine modification is found at S454. Disordered stretches follow at residues 477–513, 530–554, and 640–663; these read CSDMLLEGGPTTASVREAKEDEEDEEKIQNEDYHHEL, QLDGSSSSASSTATSNTEENDIDEE, and RPPASLLQPTASYSRKDKDQRKQQ. The span at 503–513 shows a compositional bias: basic and acidic residues; that stretch reads KIQNEDYHHEL. Positions 534–544 are enriched in low complexity; that stretch reads SSSSASSTATS. Positions 673-700 form a coiled coil; sequence KMLKRLKTQMAEVRCMKTDVKNTLSEIK. Residues 752-761 are compositionally biased toward polar residues; the sequence is NSTNKKSNSP. 2 disordered regions span residues 752–812 and 891–964; these read NSTN…SPRA and GASA…NSGR. Basic and acidic residues predominate over residues 776–788; sequence RAVDPGENSRSKG. The segment covering 794–807 has biased composition (low complexity); that stretch reads SEGSPGSSQSGSRH. Acidic residues predominate over residues 904–916; sequence SDIECDTENEEQE. Polar residues predominate over residues 955–964; that stretch reads SFNTDENSGR.

It belongs to the TRIM/RBCC family. Associates with the PRC2/EED-EZH2 complex. Post-translationally, auto-ubiquitinated. In terms of tissue distribution, ubiquitous. Highly expressed in testis, while it is weakly expressed in other tissues.

It localises to the chromosome. It is found in the cytoplasm. The protein resides in the perinuclear region. Its subcellular location is the peroxisome membrane. It catalyses the reaction S-ubiquitinyl-[E2 ubiquitin-conjugating enzyme]-L-cysteine + [acceptor protein]-L-lysine = [E2 ubiquitin-conjugating enzyme]-L-cysteine + N(6)-ubiquitinyl-[acceptor protein]-L-lysine.. It functions in the pathway protein modification; protein ubiquitination. In terms of biological role, E3 ubiquitin-protein ligase required to prevent centriole reduplication. Probably acts by ubiquitinating positive regulators of centriole reduplication. Mediates monoubiquitination of 'Lys-119' of histone H2A (H2AK119Ub), a specific tag for epigenetic transcriptional repression: associates with some Polycomb group (PcG) multiprotein PRC2-like complex and mediates repression of target genes. Also acts as a positive regulator of peroxisome import by mediating monoubiquitination of PEX5 at 'Lys-472': monoubiquitination promotes PEX5 stabilitation by preventing its polyubiquitination and degradation by the proteasome. Has anti-HIV activity. This chain is E3 ubiquitin-protein ligase TRIM37, found in Homo sapiens (Human).